A 431-amino-acid polypeptide reads, in one-letter code: NADH-quinone oxidoreductase subunit F (431 aa).

54–63 (GRGGAGFPTG) serves as a coordination point for NAD(+). An FMN-binding site is contributed by 167–214 (GAGAYICGEETALLESLEGKKGMPRMKPPFPAGSGLYGCPTTVNNVES). [4Fe-4S] cluster is bound by residues Cys346, Cys349, Cys352, and Cys392.

This sequence belongs to the complex I 51 kDa subunit family. FMN is required as a cofactor. [4Fe-4S] cluster serves as cofactor.

It catalyses the reaction a quinone + NADH + 5 H(+)(in) = a quinol + NAD(+) + 4 H(+)(out). NDH-1 shuttles electrons from NADH, via FMN and iron-sulfur (Fe-S) centers, to quinones in the respiratory chain. The immediate electron acceptor for the enzyme in this species is believed to be ubiquinone. Couples the redox reaction to proton translocation (for every two electrons transferred, four hydrogen ions are translocated across the cytoplasmic membrane), and thus conserves the redox energy in a proton gradient. The sequence is that of NADH-quinone oxidoreductase subunit F (nuoF) from Rhodobacter capsulatus (Rhodopseudomonas capsulata).